We begin with the raw amino-acid sequence, 365 residues long: Succinyl-diaminopimelate desuccinylase (365 aa).

Histidine 64 contributes to the Zn(2+) binding site. Aspartate 66 is a catalytic residue. Position 95 (aspartate 95) interacts with Zn(2+). Residue glutamate 125 is the Proton acceptor of the active site. Residues glutamate 126, glutamate 154, and histidine 339 each contribute to the Zn(2+) site.

This sequence belongs to the peptidase M20A family. DapE subfamily. As to quaternary structure, homodimer. Zn(2+) is required as a cofactor. It depends on Co(2+) as a cofactor.

It catalyses the reaction N-succinyl-(2S,6S)-2,6-diaminopimelate + H2O = (2S,6S)-2,6-diaminopimelate + succinate. It participates in amino-acid biosynthesis; L-lysine biosynthesis via DAP pathway; LL-2,6-diaminopimelate from (S)-tetrahydrodipicolinate (succinylase route): step 3/3. Catalyzes the hydrolysis of N-succinyl-L,L-diaminopimelic acid (SDAP), forming succinate and LL-2,6-diaminopimelate (DAP), an intermediate involved in the bacterial biosynthesis of lysine and meso-diaminopimelic acid, an essential component of bacterial cell walls. The chain is Succinyl-diaminopimelate desuccinylase from Nautilia profundicola (strain ATCC BAA-1463 / DSM 18972 / AmH).